The chain runs to 81 residues: ATP synthase subunit c, chloroplastic (81 aa).

2 consecutive transmembrane segments (helical) span residues proline 3–glycine 23 and leucine 57–alanine 77.

Belongs to the ATPase C chain family. As to quaternary structure, F-type ATPases have 2 components, F(1) - the catalytic core - and F(0) - the membrane proton channel. F(1) has five subunits: alpha(3), beta(3), gamma(1), delta(1), epsilon(1). F(0) has four main subunits: a(1), b(1), b'(1) and c(10-14). The alpha and beta chains form an alternating ring which encloses part of the gamma chain. F(1) is attached to F(0) by a central stalk formed by the gamma and epsilon chains, while a peripheral stalk is formed by the delta, b and b' chains.

The protein localises to the plastid. The protein resides in the chloroplast thylakoid membrane. In terms of biological role, f(1)F(0) ATP synthase produces ATP from ADP in the presence of a proton or sodium gradient. F-type ATPases consist of two structural domains, F(1) containing the extramembraneous catalytic core and F(0) containing the membrane proton channel, linked together by a central stalk and a peripheral stalk. During catalysis, ATP synthesis in the catalytic domain of F(1) is coupled via a rotary mechanism of the central stalk subunits to proton translocation. Its function is as follows. Key component of the F(0) channel; it plays a direct role in translocation across the membrane. A homomeric c-ring of between 10-14 subunits forms the central stalk rotor element with the F(1) delta and epsilon subunits. The protein is ATP synthase subunit c, chloroplastic of Euglena gracilis.